A 918-amino-acid polypeptide reads, in one-letter code: Alpha-scruin (918 aa).

Kelch repeat units lie at residues 82-133 (VVLA…YFHR), 134-187 (RVYV…VMDE), 188-235 (RIFV…NNEG), 237-289 (IYVI…TQNK), 291-341 (IWIW…KTGA), and 342-390 (HVFI…AIPA). Residues 398–427 (EVPTSTPSSKAKPQPGSKPTSVKYKKQPDI) are disordered. One can recognise an IQ domain in the interval 430–459 (RNEAAKKVQRRWRRYIEQKSITKRMQQGDS). 6 Kelch repeats span residues 590–641 (VIIG…YYRS), 642–695 (AIYI…VFND), 696–743 (VLYA…AHGG), 745–795 (IWLL…VCDN), 797–849 (IWLC…ALES), and 851–898 (LYIA…TIPP).

Sperm.

In terms of biological role, actin bundling protein found in the acrosomal sperm process. This chain is Alpha-scruin, found in Limulus polyphemus (Atlantic horseshoe crab).